A 79-amino-acid chain; its full sequence is Calcium/calmodulin-dependent protein kinase II inhibitor 2 (79 aa).

Positions 43–69 (KRPPKLGQIGRAKRVVIEDDRIDEVLK) are inhibitory domain.

The protein belongs to the CAMK2N family.

The protein localises to the nucleus. The protein resides in the cytoplasm. Its subcellular location is the cytosol. Functionally, potent and specific cellular inhibitor of CaM-kinase II (CAMK2). Traps Ca(2+)/calmodulin on CAMK2. In Xenopus tropicalis (Western clawed frog), this protein is Calcium/calmodulin-dependent protein kinase II inhibitor 2 (camk2n2).